A 194-amino-acid polypeptide reads, in one-letter code: Fe/S biogenesis protein NfuA (194 aa).

Positions 152 and 155 each coordinate [4Fe-4S] cluster.

It belongs to the NfuA family. As to quaternary structure, homodimer. Requires [4Fe-4S] cluster as cofactor.

Functionally, involved in iron-sulfur cluster biogenesis. Binds a 4Fe-4S cluster, can transfer this cluster to apoproteins, and thereby intervenes in the maturation of Fe/S proteins. Could also act as a scaffold/chaperone for damaged Fe/S proteins. The protein is Fe/S biogenesis protein NfuA of Ectopseudomonas mendocina (strain ymp) (Pseudomonas mendocina).